The sequence spans 359 residues: DNA polymerase IV (359 aa).

In terms of domain architecture, UmuC spans 4 to 184 (IVHVDMDAFY…LPVNRIPGVG (181 aa)). Residues aspartate 8 and aspartate 102 each coordinate Mg(2+). Residue glutamate 103 is part of the active site.

This sequence belongs to the DNA polymerase type-Y family. As to quaternary structure, monomer. The cofactor is Mg(2+).

It localises to the cytoplasm. The catalysed reaction is DNA(n) + a 2'-deoxyribonucleoside 5'-triphosphate = DNA(n+1) + diphosphate. In terms of biological role, poorly processive, error-prone DNA polymerase involved in untargeted mutagenesis. Copies undamaged DNA at stalled replication forks, which arise in vivo from mismatched or misaligned primer ends. These misaligned primers can be extended by PolIV. Exhibits no 3'-5' exonuclease (proofreading) activity. May be involved in translesional synthesis, in conjunction with the beta clamp from PolIII. The sequence is that of DNA polymerase IV from Xanthomonas campestris pv. campestris (strain 8004).